The following is a 418-amino-acid chain: Tyrosine--tRNA ligase (418 aa).

Tyr34 is a binding site for L-tyrosine. Residues 39–48 carry the 'HIGH' region motif; that stretch reads PTADSLHLGH. L-tyrosine contacts are provided by Tyr169 and Gln173. Residues 229–233 carry the 'KMSKS' region motif; that stretch reads KFGKS. Lys232 contacts ATP. The S4 RNA-binding domain maps to 352–418; it reads LNIVELLVNA…GKKKNFVLTY (67 aa).

Belongs to the class-I aminoacyl-tRNA synthetase family. TyrS type 1 subfamily. As to quaternary structure, homodimer.

It is found in the cytoplasm. It catalyses the reaction tRNA(Tyr) + L-tyrosine + ATP = L-tyrosyl-tRNA(Tyr) + AMP + diphosphate + H(+). Functionally, catalyzes the attachment of tyrosine to tRNA(Tyr) in a two-step reaction: tyrosine is first activated by ATP to form Tyr-AMP and then transferred to the acceptor end of tRNA(Tyr). In Streptococcus thermophilus (strain ATCC BAA-491 / LMD-9), this protein is Tyrosine--tRNA ligase.